The chain runs to 446 residues: Histone acetyltransferase type B subunit 2 (446 aa).

WD repeat units lie at residues D138–S178, G189–K229, L231–D270, G286–H326, and G330–T370. Residues D372–D376 form an interaction with the histone H4 N-terminus region. One copy of the WD 6 repeat lies at G387 to E427. Residues E427–H446 form a disordered region. Over residues D437 to H446 the composition is skewed to basic and acidic residues.

Belongs to the WD repeat RBAP46/RBAP48/MSI1 family. Component of the HAT-B complex composed of at least hat-1 and hat-2. The HAT-B complex binds to histone H4 tail.

It is found in the cytoplasm. Its subcellular location is the nucleus. Regulatory subunit of the histone acetylase B (HAT-B) complex. The complex acetylates 'Lys-12' of histone H4 which is required for telomeric silencing. This is Histone acetyltransferase type B subunit 2 (hat-2) from Neurospora crassa (strain ATCC 24698 / 74-OR23-1A / CBS 708.71 / DSM 1257 / FGSC 987).